The primary structure comprises 88 residues: YcgL domain-containing protein HI_1446 (88 aa).

A YcgL domain is found at 1–85 (MLCAIYKSKK…QDDGLFNSLS (85 aa)).

This Haemophilus influenzae (strain ATCC 51907 / DSM 11121 / KW20 / Rd) protein is YcgL domain-containing protein HI_1446.